The primary structure comprises 408 residues: Guanine nucleotide-binding protein alpha-14 subunit (408 aa).

Residues 39–46 (HSEELEAK), 79–86 (GGPLSGKS), 201–205 (TRIAD), 216–222 (VHSRKAT), 241–245 (DVGGQ), 285–288 (FPKF), 325–328 (NKVD), and Ala380 each bind GTP. In terms of domain architecture, G-alpha spans 71–408 (SHIKILILGG…KANAKATGLS (338 aa)). Residues 74-87 (KILILGGPLSGKST) are G1 motif. A Mg(2+)-binding site is contributed by Ser86. The interval 214-222 (DIVHSRKAT) is G2 motif. Thr222 contacts Mg(2+). The segment at 237–246 (LLMIDVGGQR) is G3 motif. Residues 321–328 (LLFFNKVD) form a G4 motif region. Positions 378 to 383 (TTATNT) are G5 motif.

Belongs to the G-alpha family. In terms of assembly, g proteins are composed of 3 units; alpha, beta and gamma. The alpha chain contains the guanine nucleotide binding site. Interacts with the dopamine receptor dop-2 (via C-terminus); the interaction is direct.

In terms of biological role, guanine nucleotide-binding proteins (G proteins) are involved as modulators or transducers in various transmembrane signaling systems. In association with the G-protein coupled dopamine receptor dop-2, modulates two types of learning: touch habituation and chemosensory associative conditioning. The polypeptide is Guanine nucleotide-binding protein alpha-14 subunit (Caenorhabditis elegans).